We begin with the raw amino-acid sequence, 228 residues long: Rab-like protein 2B (228 aa).

GTP contacts are provided by residues 28 to 35, 76 to 80, and 133 to 136; these read GDSAVGKS, DTAGQ, and NKID. The disordered stretch occupies residues 200–228; that stretch reads LEQEEEDVPDQEQSSSIETPSEEAASPHS.

Belongs to the small GTPase superfamily. Rab family. Interacts (in its GTP-bound form) with CEP19 (via residues 121-150); this interaction is required for its localization to the mother centriole and cilium basal body. Interacts (in its GTP-bound form) with the intraflagellar transport (IFT) complex B (via the IFT74-IFT81 heterodimer). Binding to CEP19 and the IFT74-IFT81 heterodimer is mutually exclusive. In terms of tissue distribution, expressed in the testis.

Its subcellular location is the cytoplasm. It is found in the cytoskeleton. The protein localises to the microtubule organizing center. The protein resides in the centrosome. It localises to the centriole. Its subcellular location is the cilium basal body. Functionally, small GTPase required for ciliation. Activated in a guanine nucleotide exchange factor (GEF)-independent manner via its intrinsic GDP for GTP nucleotide exchange ability. Involved in ciliary assembly by binding the intraflagellar transport (IFT) complex B from the large pool pre-docked at the base of the cilium and thus triggers its entry into the cilia. This chain is Rab-like protein 2B (RABL2B), found in Homo sapiens (Human).